A 152-amino-acid polypeptide reads, in one-letter code: Protein-export protein SecB (152 aa).

Belongs to the SecB family. Homotetramer, a dimer of dimers. One homotetramer interacts with 1 SecA dimer.

The protein resides in the cytoplasm. In terms of biological role, one of the proteins required for the normal export of preproteins out of the cell cytoplasm. It is a molecular chaperone that binds to a subset of precursor proteins, maintaining them in a translocation-competent state. It also specifically binds to its receptor SecA. The sequence is that of Protein-export protein SecB from Rickettsia bellii (strain RML369-C).